A 512-amino-acid polypeptide reads, in one-letter code: Maturase K (512 aa).

This sequence belongs to the intron maturase 2 family. MatK subfamily.

It is found in the plastid. The protein localises to the chloroplast. Functionally, usually encoded in the trnK tRNA gene intron. Probably assists in splicing its own and other chloroplast group II introns. In Lemna gibba (Swollen duckweed), this protein is Maturase K.